We begin with the raw amino-acid sequence, 205 residues long: Putative 3-methyladenine DNA glycosylase (205 aa).

This sequence belongs to the DNA glycosylase MPG family.

The polypeptide is Putative 3-methyladenine DNA glycosylase (Bacillus cereus (strain AH187)).